The chain runs to 141 residues: Flagellar assembly factor FliW (141 aa).

It belongs to the FliW family. As to quaternary structure, interacts with translational regulator CsrA and flagellin(s).

Its subcellular location is the cytoplasm. Acts as an anti-CsrA protein, binds CsrA and prevents it from repressing translation of its target genes, one of which is flagellin. Binds to flagellin and participates in the assembly of the flagellum. The sequence is that of Flagellar assembly factor FliW from Clostridium botulinum (strain Alaska E43 / Type E3).